A 368-amino-acid chain; its full sequence is Probable staphylococcal-like nuclease CAN2 (368 aa).

The N-myristoyl glycine moiety is linked to residue Gly2. Cys7 is lipidated: S-palmitoyl cysteine. The segment at 16-56 (DHYPYYKPTSRPHYQPPHYHGQPAAPPAPLQQQHLGPHGVT) is disordered. Residues 27–38 (PHYQPPHYHGQP) are compositionally biased toward low complexity. The 177-residue stretch at 168 to 344 (NTLPVYDKCI…RAANRGLWAS (177 aa)) folds into the TNase-like domain. Asp181 is a binding site for Ca(2+). Arg251 is an active-site residue. Asp256 contributes to the Ca(2+) binding site. Active-site residues include Glu259 and Arg293.

Belongs to the thermonuclease family. Ca(2+) serves as cofactor.

It is found in the cell membrane. Its function is as follows. Enzyme that catalyzes the hydrolysis of both DNA and RNA at the 5' position of the phosphodiester bond. This is Probable staphylococcal-like nuclease CAN2 from Oryza sativa subsp. japonica (Rice).